Reading from the N-terminus, the 468-residue chain is 6-phospho-beta-galactosidase (468 aa).

D-galactose 6-phosphate-binding residues include glutamine 19, histidine 116, asparagine 159, glutamate 160, and asparagine 297. Residue glutamate 160 is the Proton donor of the active site. Catalysis depends on glutamate 375, which acts as the Nucleophile. Residues serine 428, tryptophan 429, lysine 435, and tyrosine 437 each coordinate D-galactose 6-phosphate.

This sequence belongs to the glycosyl hydrolase 1 family.

The enzyme catalyses a 6-phospho-beta-D-galactoside + H2O = D-galactose 6-phosphate + an alcohol. It participates in carbohydrate metabolism; lactose degradation; D-galactose 6-phosphate and beta-D-glucose from lactose 6-phosphate: step 1/1. This is 6-phospho-beta-galactosidase from Lactococcus lactis subsp. lactis (Streptococcus lactis).